Consider the following 289-residue polypeptide: ATP synthase subunit a (289 aa).

Transmembrane regions (helical) follow at residues 43-63, 104-124, 160-180, 193-213, 232-252, and 259-279; these read AFHLDTLGWSVALGLIFLLIF, IAPLALTIFVWVFLMNAVDLI, FCVFALIIFYSIKVKGLGGFI, IFVQILLIPVNFLLEFVTLIA, VFILIAVMFGSGLLWLSGLGV, and AVFHILIITLQAFIFMMLTIV.

This sequence belongs to the ATPase A chain family. As to quaternary structure, F-type ATPases have 2 components, CF(1) - the catalytic core - and CF(0) - the membrane proton channel. CF(1) has five subunits: alpha(3), beta(3), gamma(1), delta(1), epsilon(1). CF(0) has three main subunits: a(1), b(2) and c(9-12). The alpha and beta chains form an alternating ring which encloses part of the gamma chain. CF(1) is attached to CF(0) by a central stalk formed by the gamma and epsilon chains, while a peripheral stalk is formed by the delta and b chains.

It localises to the cell inner membrane. In terms of biological role, key component of the proton channel; it plays a direct role in the translocation of protons across the membrane. This chain is ATP synthase subunit a, found in Pseudomonas putida (strain ATCC 47054 / DSM 6125 / CFBP 8728 / NCIMB 11950 / KT2440).